The sequence spans 147 residues: Mucoricin (147 aa).

In terms of domain architecture, Ricin B-type lectin spans 4–143 (EEGRLFFIKS…VSANQRWELV (140 aa)).

The protein belongs to the ribosome-inactivating protein family. Type 1 RIP subfamily.

The protein localises to the secreted. It carries out the reaction Endohydrolysis of the N-glycosidic bond at one specific adenosine on the 28S rRNA.. N-glycosylase that inhibits protein synthesis in the host by depurinating ribosomal rRNA, and thus acts as a ribosomal inactivating protein (RIP). Promotes vascular permeability in the host and induces necrosis and apoptosis of host alveolar epithelial cells. The protein is Mucoricin of Rhizopus delemar (strain RA 99-880 / ATCC MYA-4621 / FGSC 9543 / NRRL 43880) (Mucormycosis agent).